Consider the following 148-residue polypeptide: Deoxyuridine 5'-triphosphate nucleotidohydrolase (148 aa).

Substrate is bound by residues 68-70 (RSG), Asn81, 85-87 (TVD), and Lys95.

The protein belongs to the dUTPase family. Requires Mg(2+) as cofactor.

The catalysed reaction is dUTP + H2O = dUMP + diphosphate + H(+). It functions in the pathway pyrimidine metabolism; dUMP biosynthesis; dUMP from dCTP (dUTP route): step 2/2. In terms of biological role, this enzyme is involved in nucleotide metabolism: it produces dUMP, the immediate precursor of thymidine nucleotides and it decreases the intracellular concentration of dUTP so that uracil cannot be incorporated into DNA. The chain is Deoxyuridine 5'-triphosphate nucleotidohydrolase from Caldanaerobacter subterraneus subsp. tengcongensis (strain DSM 15242 / JCM 11007 / NBRC 100824 / MB4) (Thermoanaerobacter tengcongensis).